Here is a 581-residue protein sequence, read N- to C-terminus: La-related protein 7 (581 aa).

M1 is subject to N-acetylmethionine. Positions 1–10 (METESGNQKN) are enriched in polar residues. Disordered stretches follow at residues 1 to 28 (METESGNQKNVMEEESTEKKKEVEKKKR), 188 to 368 (NPPE…ERHK), and 410 to 440 (KSESEMETDGGVPQKTGMKNEKTNSEECPTQ). Positions 28-122 (RSRVKQVLAD…KPLGERPKDE (95 aa)) constitute an HTH La-type RNA-binding domain. The RRM domain occupies 125 to 203 (RTVYVELLPK…PRKPGIFPKT (79 aa)). Residues 219-228 (KKKKKKKGRM) are compositionally biased toward basic residues. The segment covering 229–240 (KKEDNVQAKEEN) has biased composition (basic and acidic residues). K237 is covalently cross-linked (Glycyl lysine isopeptide (Lys-Gly) (interchain with G-Cter in SUMO2)). At T257 the chain carries Phosphothreonine. Phosphoserine is present on residues S258, S261, S273, S298, S299, and S300. Over residues 316–335 (IQKDIIKEPSEASKENRDIE) the composition is skewed to basic and acidic residues. The residue at position 337 (S337) is a Phosphoserine. Residue T338 is modified to Phosphothreonine. S351 carries the phosphoserine modification. Basic residues predominate over residues 354–367 (KTKRKHKKKHKERH). K410 is covalently cross-linked (Glycyl lysine isopeptide (Lys-Gly) (interchain with G-Cter in SUMO2)). A xRRM domain is found at 449-562 (QFVSGVIVKI…TEKLITKAEK (114 aa)).

This sequence belongs to the LARP7 family. In terms of assembly, core component of the 7SK RNP complex, at least composed of 7SK RNA, LARP7, MEPCE, HEXIM1 (or HEXIM2) and P-TEFb (composed of CDK9 and CCNT1/cyclin-T1). Interacts with METTL16. Interacts with RBM7; upon genotoxic stress this interaction is enhanced, triggering the release of inactive P-TEFb complex from the core, yielding to P-TEFb complex activation. Associates with box C/D small nucleolar ribonucleoprotein (snoRNP) complexes.

The protein resides in the nucleus. It is found in the nucleoplasm. Its function is as follows. RNA-binding protein that specifically binds distinct small nuclear RNA (snRNAs) and regulates their processing and function. Specifically binds the 7SK snRNA (7SK RNA) and acts as a core component of the 7SK ribonucleoprotein (RNP) complex, thereby acting as a negative regulator of transcription elongation by RNA polymerase II. The 7SK RNP complex sequesters the positive transcription elongation factor b (P-TEFb) in a large inactive 7SK RNP complex preventing RNA polymerase II phosphorylation and subsequent transcriptional elongation. The 7SK RNP complex also promotes snRNA gene transcription by RNA polymerase II via interaction with the little elongation complex (LEC). LARP7 specifically binds to the highly conserved 3'-terminal U-rich stretch of 7SK RNA; on stimulation, remains associated with 7SK RNA, whereas P-TEFb is released from the complex. LARP7 also acts as a regulator of mRNA splicing fidelity by promoting U6 snRNA processing. Specifically binds U6 snRNAs and associates with a subset of box C/D RNP complexes: promotes U6 snRNA 2'-O-methylation by facilitating U6 snRNA loading into box C/D RNP complexes. U6 snRNA 2'-O-methylation is required for mRNA splicing fidelity. Binds U6 snRNAs with a 5'-CAGGG-3' sequence motif. U6 snRNA processing is required for spermatogenesis. This is La-related protein 7 from Macaca fascicularis (Crab-eating macaque).